Here is a 133-residue protein sequence, read N- to C-terminus: Capsid protein (133 aa).

The protein belongs to the Leviviricetes capsid protein family. In terms of assembly, homodimer. The capsid protein dimer binds to the viral RNA via an operator hairpin, but also many other RNA sequences in the viral genome.

Its subcellular location is the virion. Functionally, capsid protein self-assembles to form an icosahedral capsid with a T=3 symmetry, about 26 nm in diameter, and consisting of 89 capsid proteins dimers (178 capsid proteins). Involved in viral genome encapsidation through the interaction between a capsid protein dimer and the multiple packaging signals present in the RNA genome. Binding of the capsid proteins to the viral RNA induces a conformational change required for efficient T=3 shell formation. The capsid also contains 1 copy of the A2 maturation protein. In terms of biological role, acts as a translational repressor of viral replicase synthesis late in infection. This latter function is the result of capsid protein interaction with an RNA hairpin which contains the replicase ribosome-binding site. The protein is Capsid protein of Escherichia coli.